The chain runs to 500 residues: Na(+)/H(+) antiporter NhaB (500 aa).

12 consecutive transmembrane segments (helical) span residues 28-50 (FLLL…VLVG), 68-88 (GGLL…ALYA), 98-118 (LLLM…LLLF), 121-141 (LLLG…LAAL), 145-165 (FLDA…FFAV), 205-225 (LLMH…VGEP), 244-264 (QVAP…VLLE), 311-331 (VLIV…LLVI), 350-370 (FQEA…VAVI), 394-414 (MLFI…VATI), 449-469 (VATP…IAPL), and 477-497 (MVWM…WAVS).

Belongs to the NhaB Na(+)/H(+) (TC 2.A.34) antiporter family.

Its subcellular location is the cell inner membrane. The enzyme catalyses 2 Na(+)(in) + 3 H(+)(out) = 2 Na(+)(out) + 3 H(+)(in). Na(+)/H(+) antiporter that extrudes sodium in exchange for external protons. This Pseudomonas aeruginosa (strain UCBPP-PA14) protein is Na(+)/H(+) antiporter NhaB.